A 120-amino-acid chain; its full sequence is NAD(P)H-quinone oxidoreductase subunit 3 (120 aa).

3 consecutive transmembrane segments (helical) span residues 6–26 (GYDA…LALV), 64–84 (MFAL…PWAV), and 89–109 (LGLL…VALA).

It belongs to the complex I subunit 3 family. NDH-1 can be composed of about 15 different subunits; different subcomplexes with different compositions have been identified which probably have different functions.

The protein localises to the cellular thylakoid membrane. The catalysed reaction is a plastoquinone + NADH + (n+1) H(+)(in) = a plastoquinol + NAD(+) + n H(+)(out). It carries out the reaction a plastoquinone + NADPH + (n+1) H(+)(in) = a plastoquinol + NADP(+) + n H(+)(out). In terms of biological role, NDH-1 shuttles electrons from an unknown electron donor, via FMN and iron-sulfur (Fe-S) centers, to quinones in the respiratory and/or the photosynthetic chain. The immediate electron acceptor for the enzyme in this species is believed to be plastoquinone. Couples the redox reaction to proton translocation, and thus conserves the redox energy in a proton gradient. Cyanobacterial NDH-1 also plays a role in inorganic carbon-concentration. In Prochlorococcus marinus (strain MIT 9211), this protein is NAD(P)H-quinone oxidoreductase subunit 3.